Reading from the N-terminus, the 213-residue chain is Pyrrolidone-carboxylate peptidase (213 aa).

Active-site residues include glutamate 78, cysteine 141, and histidine 165.

It belongs to the peptidase C15 family. As to quaternary structure, homotetramer.

It localises to the cytoplasm. It catalyses the reaction Release of an N-terminal pyroglutamyl group from a polypeptide, the second amino acid generally not being Pro.. Its function is as follows. Removes 5-oxoproline from various penultimate amino acid residues except L-proline. The protein is Pyrrolidone-carboxylate peptidase of Enterococcus faecalis (strain ATCC 700802 / V583).